The chain runs to 174 residues: MSGPSPTYVTFDTSVGSFTVELYTAHAPKTCNNFAKLAERGYYNGVIFHRIIPNFMIQGGDPTGTGRGGTSIYGDRFADEIHPELRFVGAGILAMANSGPNTNGSQFFITCAPTPYLDGKHTIFGRVSSGMKTIQRLEAVRTDKDDRPVEEIKIHRARLGDATQGGGLAVAMPA.

The 155-residue stretch at 5 to 159 (SPTYVTFDTS…EEIKIHRARL (155 aa)) folds into the PPIase cyclophilin-type domain.

It belongs to the cyclophilin-type PPIase family. PPIL1 subfamily.

It catalyses the reaction [protein]-peptidylproline (omega=180) = [protein]-peptidylproline (omega=0). In terms of biological role, PPIases accelerate the folding of proteins. It catalyzes the cis-trans isomerization of proline imidic peptide bonds in oligopeptides. This is Peptidyl-prolyl cis-trans isomerase-like 1 (CYP1) from Cryptococcus neoformans var. neoformans serotype D (strain B-3501A) (Filobasidiella neoformans).